The chain runs to 122 residues: Large ribosomal subunit protein uL14 (122 aa).

This sequence belongs to the universal ribosomal protein uL14 family. Part of the 50S ribosomal subunit. Forms a cluster with proteins L3 and L19. In the 70S ribosome, L14 and L19 interact and together make contacts with the 16S rRNA in bridges B5 and B8.

Binds to 23S rRNA. Forms part of two intersubunit bridges in the 70S ribosome. This is Large ribosomal subunit protein uL14 from Thermoanaerobacter pseudethanolicus (strain ATCC 33223 / 39E) (Clostridium thermohydrosulfuricum).